Consider the following 81-residue polypeptide: Cell division protein ZapB (81 aa).

Residues 5–81 (LEVFEKLEAK…QALLGRMEEV (77 aa)) are a coiled coil. The residue at position 10 (K10) is an N6-acetyllysine. The interval 36–67 (NNSLSQEVQNAQHQREELERENNHLKEQQNGW) is disordered. Residues 37 to 47 (NSLSQEVQNAQ) show a composition bias toward polar residues. A compositionally biased stretch (basic and acidic residues) spans 48 to 62 (HQREELERENNHLKE).

It belongs to the ZapB family. As to quaternary structure, homodimer. The ends of the coiled-coil dimer bind to each other, forming polymers. Interacts with FtsZ.

The protein resides in the cytoplasm. Functionally, non-essential, abundant cell division factor that is required for proper Z-ring formation. It is recruited early to the divisome by direct interaction with FtsZ, stimulating Z-ring assembly and thereby promoting cell division earlier in the cell cycle. Its recruitment to the Z-ring requires functional FtsA or ZipA. This is Cell division protein ZapB from Shigella boydii serotype 4 (strain Sb227).